Consider the following 142-residue polypeptide: MAKKVTGYLKLQVPAGAANPSPPIGPALGQRGLNIMEFCKAFNAQTQKEEKNTPIPVVITIYADRSFTFEMKTPPMSFFLKQAAKIQSGSKAPGRDKAGKVTKAQVREIAEKKMKDLNCDSIESAMKMVEGSARSMGLEVAG.

It belongs to the universal ribosomal protein uL11 family. Part of the ribosomal stalk of the 50S ribosomal subunit. Interacts with L10 and the large rRNA to form the base of the stalk. L10 forms an elongated spine to which L12 dimers bind in a sequential fashion forming a multimeric L10(L12)X complex. Post-translationally, one or more lysine residues are methylated.

Forms part of the ribosomal stalk which helps the ribosome interact with GTP-bound translation factors. In Bradyrhizobium sp. (strain ORS 278), this protein is Large ribosomal subunit protein uL11.